Consider the following 425-residue polypeptide: MAKLNPKFISLILFALVVIVSAEVIFEEKFEDGWEKRWVKSDWKKDDNTAGEWKHTAGNWSGDANDKGIQTSEDYRFYAISAEFPEFSNKDKTLVFQFSVKHEQKLDCGGGYMKLLSDDVDQTKFGGDTPYSIMFGPDICGYSTKKVHAILTYNGTNHLIKKEVPCETDQLTHVYTFVLRPDATYSILIDNVEKQTGSLYSDWDLLPAKKIKDPSAKKPEDWDDKEYIPDPEDTKPAGYDDIPKEIPDTDAKKPEDWDDEEDGEWTAPTIPNPEYNGEWKPKKIKNPAYKGKWKAPMIDNPEFKDDPELYVFPKLKYVGVELWQVKSGSLFDNVLVSDDPEYAKKLAEETWGKHKDAEKAAFDEAEKKREEEESKDAPAESDAEEEAEDDDNEGDDSDNESKSEETKEAEETKEAEETDAAHDEL.

Positions 1-22 are cleaved as a signal peptide; sequence MAKLNPKFISLILFALVVIVSA. A glycan (N-linked (GlcNAc...) asparagine) is linked at Asn-59. An intrachain disulfide couples Cys-108 to Cys-140. 4 residues coordinate an alpha-D-glucoside: Tyr-112, Lys-114, Tyr-131, and Asp-138. Asn-154 carries an N-linked (GlcNAc...) asparagine glycan. Repeat copies occupy residues 194–205, 213–224, 230–241, 248–259, 263–273, 277–287, and 291–301. A 4 X approximate repeats region spans residues 194 to 259; that stretch reads KQTGSLYSDW…DAKKPEDWDD (66 aa). 2 stretches are compositionally biased toward basic and acidic residues: residues 213-235 and 241-255; these read DPSA…EDTK and DIPK…KKPE. The interval 213 to 281 is disordered; the sequence is DPSAKKPEDW…NPEYNGEWKP (69 aa). The tract at residues 263-301 is 3 X approximate repeats; it reads GEWTAPTIPNPEYNGEWKPKKIKNPAYKGKWKAPMIDNP. Glu-321 provides a ligand contact to an alpha-D-glucoside. A compositionally biased stretch (basic and acidic residues) spans 348–378; sequence EETWGKHKDAEKAAFDEAEKKREEEESKDAP. A disordered region spans residues 348 to 425; the sequence is EETWGKHKDA…EETDAAHDEL (78 aa). Positions 379–398 are enriched in acidic residues; the sequence is AESDAEEEAEDDDNEGDDSD. Phosphoserine is present on residues Ser-381 and Ser-397. Asn-399 carries N-linked (GlcNAc...) asparagine glycosylation. Residues 399-412 show a composition bias toward basic and acidic residues; sequence NESKSEETKEAEET. A Prevents secretion from ER motif is present at residues 422-425; the sequence is HDEL.

This sequence belongs to the calreticulin family.

The protein resides in the endoplasmic reticulum lumen. In terms of biological role, molecular calcium-binding chaperone promoting folding, oligomeric assembly and quality control in the ER via the calreticulin/calnexin cycle. This lectin may interact transiently with almost all of the monoglucosylated glycoproteins that are synthesized in the ER. This Arabidopsis thaliana (Mouse-ear cress) protein is Calreticulin-1 (CRT1).